The chain runs to 517 residues: Nectin-1 (517 aa).

Residues 1–30 (MARMGLAGAAGRWWGLALGLTAFFLPGVHS) form the signal peptide. In terms of domain architecture, Ig-like V-type spans 31–141 (QVVQVNDSMY…GNRESQLNLT (111 aa)). Residues 31 to 355 (QVVQVNDSMY…GRRAGPVPTA (325 aa)) are Extracellular-facing. N-linked (GlcNAc...) asparagine glycans are attached at residues asparagine 36, asparagine 72, and asparagine 139. Cysteines 51 and 124 form a disulfide. Ig-like C2-type domains are found at residues 149–238 (WIEG…FKES) and 247–334 (PEVT…VNIT). Cystine bridges form between cysteine 172–cysteine 226 and cysteine 269–cysteine 316. Asparagine 202 is a glycosylation site (N-linked (GlcNAc...) (complex) asparagine). The tract at residues 282–299 (WTTLNGSLPKGVEAQNRT) is interaction with FGFR. N-linked (GlcNAc...) asparagine glycosylation is found at asparagine 286, asparagine 297, asparagine 307, and asparagine 332. A helical membrane pass occupies residues 356–376 (IIGGVAGSILLVLIVVGGIVV). The Cytoplasmic segment spans residues 377–517 (ALRRRRHTFK…SFISKKEWYV (141 aa)). The disordered stretch occupies residues 399-488 (GYSKAGIPQH…DGYGDRTLGY (90 aa)). Phosphoserine occurs at positions 422, 434, and 435. Phosphotyrosine is present on tyrosine 436. Residues 436 to 445 (YEEEEEEEEG) show a composition bias toward acidic residues. Residues 449–466 (GERKVGGPHPKYDEDAKR) show a composition bias toward basic and acidic residues. Serine 511 is modified (phosphoserine).

This sequence belongs to the nectin family. In terms of assembly, cis- and trans-homodimer. Can form trans-heterodimers with NECTIN3 and with NECTIN4. Interaction between NECTIN1 and NECTIN3 on the pre- and postsynaptic sites, respectively, initiates the formation of puncta adherentia junctions between axons and dendrites. Interacts (via cytoplasmic domain) with AFDN (via PDZ domain); this interaction recruits NECTIN1 to cadherin-based adherens junctions and provides a connection with the actin cytoskeleton. Interacts with integrin alphaV/beta3. Interacts (via Ig-like C2-type domain 2) with FGFR1, FGFR2 and FGFR3. As to quaternary structure, (Microbial infection) Interacts with herpes simplex virus 1/HHV-1, herpes simplex virus 2/HHV-2, and pseudorabies virus/PRV envelope glycoprotein D. Post-translationally, (Microbial infection) Ubiquitinated by CBL following infection by herpes simplex virus 1/HHV-1 and association with HHV-1 envelope glycoprotein D, leading to its removal from cell surface.

It localises to the cell membrane. The protein localises to the cell junction. The protein resides in the adherens junction. It is found in the presynaptic cell membrane. Its subcellular location is the secreted. Cell adhesion molecule that promotes cell-cell contacts and plays important roles in the development of the nervous system. Acts by forming homophilic or heterophilic trans-dimers. Heterophilic interactions have been detected between NECTIN1 and NECTIN3 and between NECTIN1 and NECTIN4. Involved in axon guidance by promoting contacts between the commissural axons and the floor plate cells. Involved in synaptogegesis. Has some neurite outgrowth-promoting activity. Promotes formation of checkerboard-like cellular pattern of hair cells and supporting cells in the auditory epithelium via heterophilic interaction with NECTIN3: NECTIN1 is present in the membrane of hair cells and associates with NECTIN3 on supporting cells, thereby mediating heterotypic adhesion between these two cell types. Required for enamel mineralization. Its function is as follows. (Microbial infection) Acts as a receptor for herpes simplex virus 1/HHV-1, herpes simplex virus 2/HHV-2, and pseudorabies virus/PRV. Constitutes the major receptor for herpes simplex virus 1/HHV-1 entry into host cells. This chain is Nectin-1, found in Homo sapiens (Human).